Reading from the N-terminus, the 114-residue chain is MEQVSATARYLRIGPQKVRMLVDGIKGKSVEKGLNTLRFMPNKGAGLVEKALRSAVANAEEKNMDVDGLVILNVLVDQGPTLKRFRPRARGRATRILKRTSHITVVLAEKAAKN.

The protein belongs to the universal ribosomal protein uL22 family. In terms of assembly, part of the 50S ribosomal subunit.

This protein binds specifically to 23S rRNA; its binding is stimulated by other ribosomal proteins, e.g. L4, L17, and L20. It is important during the early stages of 50S assembly. It makes multiple contacts with different domains of the 23S rRNA in the assembled 50S subunit and ribosome. Functionally, the globular domain of the protein is located near the polypeptide exit tunnel on the outside of the subunit, while an extended beta-hairpin is found that lines the wall of the exit tunnel in the center of the 70S ribosome. This Desulfosudis oleivorans (strain DSM 6200 / JCM 39069 / Hxd3) (Desulfococcus oleovorans) protein is Large ribosomal subunit protein uL22.